Reading from the N-terminus, the 147-residue chain is Sec-independent protein translocase protein TatB (147 aa).

The helical transmembrane segment at 1-21 threads the bilayer; that stretch reads MFDIGFWELVVIGVVALVVLG. Residues 114 to 147 are disordered; the sequence is EPVAPISVATPDEEPTVIPAARAQPSAEQGEVKP.

Belongs to the TatB family. In terms of assembly, the Tat system comprises two distinct complexes: a TatABC complex, containing multiple copies of TatA, TatB and TatC subunits, and a separate TatA complex, containing only TatA subunits. Substrates initially bind to the TatABC complex, which probably triggers association of the separate TatA complex to form the active translocon.

It is found in the cell inner membrane. Functionally, part of the twin-arginine translocation (Tat) system that transports large folded proteins containing a characteristic twin-arginine motif in their signal peptide across membranes. Together with TatC, TatB is part of a receptor directly interacting with Tat signal peptides. TatB may form an oligomeric binding site that transiently accommodates folded Tat precursor proteins before their translocation. The protein is Sec-independent protein translocase protein TatB of Aeromonas hydrophila subsp. hydrophila (strain ATCC 7966 / DSM 30187 / BCRC 13018 / CCUG 14551 / JCM 1027 / KCTC 2358 / NCIMB 9240 / NCTC 8049).